Reading from the N-terminus, the 266-residue chain is Probable dihydroorotate dehydrogenase B (NAD(+)), electron transfer subunit (266 aa).

The region spanning 5-99 (NVPEVLEIKR…RGPYGRGFEL (95 aa)) is the FAD-binding FR-type domain. Residues Cys-217, Cys-222, Cys-225, and Cys-235 each contribute to the [2Fe-2S] cluster site.

This sequence belongs to the PyrK family. As to quaternary structure, heterotetramer of 2 PyrK and 2 PyrD type B subunits. [2Fe-2S] cluster is required as a cofactor. Requires FAD as cofactor.

It participates in pyrimidine metabolism; UMP biosynthesis via de novo pathway; orotate from (S)-dihydroorotate (NAD(+) route): step 1/1. Responsible for channeling the electrons from the oxidation of dihydroorotate from the FMN redox center in the PyrD type B subunit to the ultimate electron acceptor NAD(+). This Methanothermobacter thermautotrophicus (strain ATCC 29096 / DSM 1053 / JCM 10044 / NBRC 100330 / Delta H) (Methanobacterium thermoautotrophicum) protein is Probable dihydroorotate dehydrogenase B (NAD(+)), electron transfer subunit.